A 182-amino-acid chain; its full sequence is Adenine phosphoribosyltransferase (182 aa).

Belongs to the purine/pyrimidine phosphoribosyltransferase family. In terms of assembly, homodimer.

The protein localises to the cytoplasm. It carries out the reaction AMP + diphosphate = 5-phospho-alpha-D-ribose 1-diphosphate + adenine. It functions in the pathway purine metabolism; AMP biosynthesis via salvage pathway; AMP from adenine: step 1/1. Catalyzes a salvage reaction resulting in the formation of AMP, that is energically less costly than de novo synthesis. The chain is Adenine phosphoribosyltransferase from Pseudomonas entomophila (strain L48).